The following is a 287-amino-acid chain: Uroplakin-3a (287 aa).

An N-terminal signal peptide occupies residues 1-18; that stretch reads MPPLWVVLALGCLRLGSG. At 19–207 the chain is on the lumenal side; that stretch reads VNLQPQLASV…DTWPGRRSGG (189 aa). Asn74, Asn139, and Asn170 each carry an N-linked (GlcNAc...) asparagine glycan. Residues 208–235 form a helical membrane-spanning segment; that stretch reads MIVITSILGSLPFFLLIGFAGAIVLSLV. At 236–287 the chain is on the cytoplasmic side; the sequence is DRGDADGATSHDSQITQEAVPKSLGTSEPSYTSVNRGPSLDRAEVYASKLQD. The tract at residues 243–274 is disordered; the sequence is ATSHDSQITQEAVPKSLGTSEPSYTSVNRGPS. Residues 259 to 271 are compositionally biased toward polar residues; that stretch reads LGTSEPSYTSVNR.

Belongs to the uroplakin-3 family. In terms of assembly, heterodimer with uroplakin-1B (UPK1B). Bladder epithelium.

The protein localises to the endoplasmic reticulum membrane. Functionally, component of the asymmetric unit membrane (AUM); a highly specialized biomembrane elaborated by terminally differentiated urothelial cells. May play an important role in AUM-cytoskeleton interaction in terminally differentiated urothelial cells. It also contributes to the formation of urothelial glycocalyx which may play an important role in preventing bacterial adherence. The chain is Uroplakin-3a (UPK3A) from Bos taurus (Bovine).